A 253-amino-acid polypeptide reads, in one-letter code: Chitooligosaccharide deacetylase (253 aa).

Mg(2+)-binding residues include H61 and H126.

This sequence belongs to the YdjC deacetylase family. ChbG subfamily. In terms of assembly, homodimer. Requires Mg(2+) as cofactor.

It is found in the cytoplasm. It carries out the reaction N,N'-diacetylchitobiose + H2O = N-acetyl-beta-D-glucosaminyl-(1-&gt;4)-D-glucosamine + acetate. The enzyme catalyses diacetylchitobiose-6'-phosphate + H2O = N'-monoacetylchitobiose-6'-phosphate + acetate. The protein operates within glycan degradation; chitin degradation. Involved in the degradation of chitin. ChbG is essential for growth on the acetylated chitooligosaccharides chitobiose and chitotriose but is dispensable for growth on cellobiose and chitosan dimer, the deacetylated form of chitobiose. Deacetylation of chitobiose-6-P and chitotriose-6-P is necessary for both the activation of the chb promoter by the regulatory protein ChbR and the hydrolysis of phosphorylated beta-glucosides by the phospho-beta-glucosidase ChbF. Catalyzes the removal of only one acetyl group from chitobiose-6-P to yield monoacetylchitobiose-6-P, the inducer of ChbR and the substrate of ChbF. This Yersinia pestis bv. Antiqua (strain Angola) protein is Chitooligosaccharide deacetylase.